We begin with the raw amino-acid sequence, 301 residues long: MADQLIRATAADGGIRAVGVITTRLTEEARQRHKLSYVATAALGRTMAAGLLMASSMKRAGSRVNVRVKGDGPLAGILVDAGLDGTVRGYVGNPHIELPPNARGKLDVGGAVGNGYLYVVRDIGYGYPYSSTVELVSGEIGDDVAHYLVTSEQTPSALMLGVFVGAGGVTAAGGLLVQVLPKAARDEALVAKLESRVGALSGFTPLLQAGKTLPEIFHDLLGDMGLTIFPESQILRFHCGCSFDRVLGALKMLGEAELQDMIVKDDGAEATCDFCGRVYQASSEHLTQLIVDLQTESSVSG.

Intrachain disulfides connect Cys-239-Cys-241 and Cys-272-Cys-275.

This sequence belongs to the HSP33 family. In terms of processing, under oxidizing conditions two disulfide bonds are formed involving the reactive cysteines. Under reducing conditions zinc is bound to the reactive cysteines and the protein is inactive.

Its subcellular location is the cytoplasm. Its function is as follows. Redox regulated molecular chaperone. Protects both thermally unfolding and oxidatively damaged proteins from irreversible aggregation. Plays an important role in the bacterial defense system toward oxidative stress. This chain is 33 kDa chaperonin, found in Trichormus variabilis (strain ATCC 29413 / PCC 7937) (Anabaena variabilis).